The primary structure comprises 360 residues: Protein phosphatase 1L (360 aa).

Residues 1 to 25 (MIEDTMTLLSLLGRIMRYFLLRPET) are Extracellular-facing. The helical transmembrane segment at 26–42 (LFLLCISLALWSYFFHT) threads the bilayer. Residues 43-360 (DEVKTIVKSS…FRNSSKTEEH (318 aa)) are Cytoplasmic-facing. Residues 92–351 (NVAVYSIQGR…DNITVMVVKF (260 aa)) form the PPM-type phosphatase domain. D128, G129, D302, and D342 together coordinate Mn(2+).

It belongs to the PP2C family. In terms of assembly, interacts with MAP3K7/TAK1 and MAP3K5. Mg(2+) is required as a cofactor. Requires Mn(2+) as cofactor. As to expression, expressed in brain, heart, testis, liver, lung and skeletal muscle.

The protein resides in the membrane. The enzyme catalyses O-phospho-L-seryl-[protein] + H2O = L-seryl-[protein] + phosphate. It carries out the reaction O-phospho-L-threonyl-[protein] + H2O = L-threonyl-[protein] + phosphate. Acts as a suppressor of the SAPK signaling pathways by associating with and dephosphorylating MAP3K7/TAK1 and MAP3K5, and by attenuating the association between MAP3K7/TAK1 and MAP2K4 or MAP2K6. This chain is Protein phosphatase 1L (Ppm1l), found in Mus musculus (Mouse).